The primary structure comprises 34 residues: Cytochrome c oxidase subunit 6B (34 aa).

This sequence belongs to the cytochrome c oxidase subunit 6B family. Component of the cytochrome c oxidase (complex IV, CIV), a multisubunit enzyme composed of 14 subunits. The complex is composed of a catalytic core of 3 subunits MT-CO1, MT-CO2 and MT-CO3, encoded in the mitochondrial DNA, and 11 supernumerary subunits COX4I, COX5A, COX5B, COX6A, COX6B, COX6C, COX7A, COX7B, COX7C, COX8 and NDUFA4, which are encoded in the nuclear genome. The complex exists as a monomer or a dimer and forms supercomplexes (SCs) in the inner mitochondrial membrane with NADH-ubiquinone oxidoreductase (complex I, CI) and ubiquinol-cytochrome c oxidoreductase (cytochrome b-c1 complex, complex III, CIII), resulting in different assemblies (supercomplex SCI(1)III(2)IV(1) and megacomplex MCI(2)III(2)IV(2)). Post-translationally, the N-terminus is blocked.

It localises to the mitochondrion inner membrane. The protein operates within energy metabolism; oxidative phosphorylation. Its function is as follows. Component of the cytochrome c oxidase, the last enzyme in the mitochondrial electron transport chain which drives oxidative phosphorylation. The respiratory chain contains 3 multisubunit complexes succinate dehydrogenase (complex II, CII), ubiquinol-cytochrome c oxidoreductase (cytochrome b-c1 complex, complex III, CIII) and cytochrome c oxidase (complex IV, CIV), that cooperate to transfer electrons derived from NADH and succinate to molecular oxygen, creating an electrochemical gradient over the inner membrane that drives transmembrane transport and the ATP synthase. Cytochrome c oxidase is the component of the respiratory chain that catalyzes the reduction of oxygen to water. Electrons originating from reduced cytochrome c in the intermembrane space (IMS) are transferred via the dinuclear copper A center (CU(A)) of subunit 2 and heme A of subunit 1 to the active site in subunit 1, a binuclear center (BNC) formed by heme A3 and copper B (CU(B)). The BNC reduces molecular oxygen to 2 water molecules using 4 electrons from cytochrome c in the IMS and 4 protons from the mitochondrial matrix. This chain is Cytochrome c oxidase subunit 6B, found in Thunnus obesus (Bigeye tuna).